The primary structure comprises 521 residues: Vang-like protein 2 (521 aa).

Residues 1 to 81 (MDNDSQYSGY…TTVVTGTSEH (81 aa)) form a disordered region. Topologically, residues 1-108 (MDNDSQYSGY…AKLDCSRHLG (108 aa)) are cytoplasmic. Residues 15–33 (GHSRSSRKHRDRRERHRSK) show a composition bias toward basic residues. Over residues 57-67 (ESTRGEDRDDN) the composition is skewed to basic and acidic residues. A compositionally biased stretch (low complexity) spans 69 to 81 (GETTTVVTGTSEH). The helical transmembrane segment at 109 to 129 (VVIGGALALLSFLTPIAFMLL) threads the bilayer. Over 130–147 (PQILWREDLEQCGTACEG) the chain is Extracellular. Residues 148–168 (LFISVAFKLLILLLGSWALFF) form a helical membrane-spanning segment. Residues 169-178 (RRPKAFFPRV) lie on the Cytoplasmic side of the membrane. A helical transmembrane segment spans residues 179–199 (FVFRALLMVLVFLLVVSYWLF). Over 200 to 218 (YGVRILESRDKNYQGIVQY) the chain is Extracellular. A helical transmembrane segment spans residues 219–239 (AVSLVDALLFVHYLAVVLLEL). Residues 240–521 (RQLQPQFTVK…VMRLQSETSV (282 aa)) are Cytoplasmic-facing. The PDZ-binding signature appears at 518–521 (ETSV).

Belongs to the Vang family. In terms of assembly, interacts with dvl/dsh. Interacts with prickle3.

It is found in the cell membrane. In terms of biological role, has a role in non-canonical Wnt/planar cell polarity (PCP) signaling; can recruit dvl/dsh and prickle from the cytoplasm to the plasma membrane. Acts in a PCP complex to regulate the polarized assembly of fibronectrin on the surface of the mesoderm during gastrulation. Regulates convergent extension in both dorsal mesoderm and neural tissue without affecting cell fate. Regulates neural fold closure during neurulation. May be required for cell surface localization of fzd3 and fzd6 in the inner ear. The sequence is that of Vang-like protein 2 from Xenopus tropicalis (Western clawed frog).